The following is a 212-amino-acid chain: Nitrogen regulatory protein P-II homolog (212 aa).

3 stretches are compositionally biased toward low complexity: residues 1 to 12 (MSSPATAAAAAA), 32 to 46 (TTTT…SRSR), and 63 to 74 (PPTAARAQSAAA). A chloroplast-targeting transit peptide spans 1 to 68 (MSSPATAAAA…PRRLPPTAAR (68 aa)). The segment at 1–74 (MSSPATAAAA…TAARAQSAAA (74 aa)) is disordered. ATP-binding positions include 117–121 (GFGAQ) and 170–173 (GDGK). Gly119 contacts Mg(2+).

The protein belongs to the P(II) protein family. In terms of assembly, homodimer.

The protein localises to the plastid. It localises to the chloroplast. Functionally, participates in sensing carbon and organic nitrogen status and regulates some steps of primary carbon and nitrogen metabolism. The polypeptide is Nitrogen regulatory protein P-II homolog (GLB) (Oryza sativa subsp. japonica (Rice)).